The following is a 386-amino-acid chain: Patatin-15 (386 aa).

Positions 1–23 are cleaved as a signal peptide; sequence MATTKSFLILFFMILATTSSTCA. One can recognise a PNPLA domain in the interval 32-229; that stretch reads LSIDGGGIKG…TVGDPALLSL (198 aa). Residues 36–41 carry the GXGXXG motif; the sequence is GGGIKG. The short motif at 75-79 is the GXSXG element; that stretch reads GTSTG. Catalysis depends on serine 77, which acts as the Nucleophile. A glycan (N-linked (GlcNAc...) asparagine) is linked at asparagine 115. The active-site Proton acceptor is the aspartate 215. The short motif at 215–217 is the DGA/G element; the sequence is DGG. Residues 321–384 adopt a coiled-coil conformation; sequence ENALTGTTTE…DRKKLRANKA (64 aa).

Belongs to the patatin family. As to expression, tuber.

It is found in the vacuole. Functionally, probable lipolytic acyl hydrolase (LAH), an activity which is thought to be involved in the response of tubers to pathogens. This is Patatin-15 from Solanum tuberosum (Potato).